Reading from the N-terminus, the 597-residue chain is Elongation factor 4 (597 aa).

Residues 2 to 184 form the tr-type G domain; sequence KHIRNFSIIA…TIVKSIPAPE (183 aa). Residues 14 to 19 and 131 to 134 each bind GTP; these read DHGKST and NKID.

The protein belongs to the TRAFAC class translation factor GTPase superfamily. Classic translation factor GTPase family. LepA subfamily.

It localises to the cell inner membrane. The catalysed reaction is GTP + H2O = GDP + phosphate + H(+). Functionally, required for accurate and efficient protein synthesis under certain stress conditions. May act as a fidelity factor of the translation reaction, by catalyzing a one-codon backward translocation of tRNAs on improperly translocated ribosomes. Back-translocation proceeds from a post-translocation (POST) complex to a pre-translocation (PRE) complex, thus giving elongation factor G a second chance to translocate the tRNAs correctly. Binds to ribosomes in a GTP-dependent manner. The protein is Elongation factor 4 of Aliivibrio fischeri (strain MJ11) (Vibrio fischeri).